The primary structure comprises 442 residues: Trigger factor (442 aa).

The region spanning 165–250 (DDRVIIDFEG…LQKVMAPELP (86 aa)) is the PPIase FKBP-type domain.

The protein belongs to the FKBP-type PPIase family. Tig subfamily.

It is found in the cytoplasm. The enzyme catalyses [protein]-peptidylproline (omega=180) = [protein]-peptidylproline (omega=0). Functionally, involved in protein export. Acts as a chaperone by maintaining the newly synthesized protein in an open conformation. Functions as a peptidyl-prolyl cis-trans isomerase. The sequence is that of Trigger factor from Coxiella burnetii (strain CbuG_Q212) (Coxiella burnetii (strain Q212)).